The chain runs to 430 residues: 26S protease regulatory subunit 6A (430 aa).

218–225 (GPPGTGKT) provides a ligand contact to ATP.

Belongs to the AAA ATPase family. As to quaternary structure, component of the 19S proteasome regulatory particle complex. The 26S proteasome consists of a 20S core particle (CP) and two 19S regulatory subunits (RP). The regulatory particle is made of a lid composed of 9 subunits, a base containing 6 ATPases including the PSMC3 homolog rpt-5 and few additional components.

Its subcellular location is the cytoplasm. The protein localises to the nucleus. Functionally, component of the 26S proteasome, a multiprotein complex involved in the ATP-dependent degradation of ubiquitinated proteins. This complex plays a key role in the maintenance of protein homeostasis by removing misfolded or damaged proteins, which could impair cellular functions, and by removing proteins whose functions are no longer required. Therefore, the proteasome participates in numerous cellular processes, including cell cycle progression, apoptosis, or DNA damage repair. Belongs to the heterohexameric ring of AAA (ATPases associated with diverse cellular activities) proteins that unfolds ubiquitinated target proteins that are concurrently translocated into a proteolytic chamber and degraded into peptides. This chain is 26S protease regulatory subunit 6A, found in Caenorhabditis elegans.